We begin with the raw amino-acid sequence, 474 residues long: Transcription termination factor Rho (474 aa).

The interval 1-60 (MTEELDNTPSPAGDIPQETLPKPLPAPEETAGEQPAAAPEENRGNAVREEEEAAPVLEQI) is disordered. The region spanning 107-182 (EVVVSGVMEQ…ASVISVEDIP (76 aa)) is the Rho RNA-BD domain. Residues 226–231 (GKGQRG), 238–243 (RGGKTV), and arginine 269 each bind ATP.

Belongs to the Rho family. Homohexamer. The homohexamer assembles into an open ring structure.

Functionally, facilitates transcription termination by a mechanism that involves Rho binding to the nascent RNA, activation of Rho's RNA-dependent ATPase activity, and release of the mRNA from the DNA template. The sequence is that of Transcription termination factor Rho from Akkermansia muciniphila (strain ATCC BAA-835 / DSM 22959 / JCM 33894 / BCRC 81048 / CCUG 64013 / CIP 107961 / Muc).